The sequence spans 352 residues: Forkhead box protein D5 (352 aa).

Disordered stretches follow at residues 1 to 32 and 47 to 92; these read MSLSQESGAHHDPQDYPVVSDEEDEIDILGED and HSEM…GKAK. Residues 20-32 are compositionally biased toward acidic residues; that stretch reads SDEEDEIDILGED. Residues 73-82 show a composition bias toward low complexity; sequence ESEGGTSKDS. A DNA-binding region (fork-head) is located at residues 97–191; sequence KPPYSYIALI…DNGSFLRRRK (95 aa).

In terms of tissue distribution, expression begins in the newly forming dorsal mesoderm and is maintained during gastrulation at the dorsal blastopore lip (Spemann organizer). At the early neurula stages, expressed in a row of cells along the dorsal midline that are destined to become the fllor plate of the neural tube. At late neurula, expressed within the anterior and posterior poles of the embryo. After neural closure, expression is detected only in the tailtip, the otic vesicle and at the midbrain/hindbrain boundary.

It localises to the nucleus. Transcriptional repressor. This chain is Forkhead box protein D5, found in Xenopus tropicalis (Western clawed frog).